The primary structure comprises 126 residues: DNA-directed RNA polymerase subunit omega (126 aa).

This sequence belongs to the RNA polymerase subunit omega family. As to quaternary structure, the RNAP catalytic core consists of 2 alpha, 1 beta, 1 beta' and 1 omega subunit. When a sigma factor is associated with the core the holoenzyme is formed, which can initiate transcription.

It carries out the reaction RNA(n) + a ribonucleoside 5'-triphosphate = RNA(n+1) + diphosphate. Functionally, promotes RNA polymerase assembly. Latches the N- and C-terminal regions of the beta' subunit thereby facilitating its interaction with the beta and alpha subunits. The sequence is that of DNA-directed RNA polymerase subunit omega from Rickettsia bellii (strain OSU 85-389).